Here is a 211-residue protein sequence, read N- to C-terminus: MGVTCVTQVPVLEGKSVQQTVELLSKKLELLGAEKHGAFGVDCETYHTAAAISSQGQTGKLMYVMHNSEYPLSCFALFENGPCLIADANFDTLMVKLKGFFQNAKANKIESRGTRYQYCDFLVKVGTVTMGPSARGISVEVEYCPCVIANDCWNLLMEFMQSFMGSHTPGIPSVFGTKHDSIYSPADTMVQYMELFNKIRKQQQVPVAGIR.

This sequence belongs to the Mediator complex subunit 20 family. Component of the Mediator complex.

It is found in the nucleus. Functionally, component of the Mediator complex, a coactivator involved in the regulated transcription of nearly all RNA polymerase II-dependent genes. Mediator functions as a bridge to convey information from gene-specific regulatory proteins to the basal RNA polymerase II transcription machinery. Mediator is recruited to promoters by direct interactions with regulatory proteins and serves as a scaffold for the assembly of a functional preinitiation complex with RNA polymerase II and the general transcription factors. The polypeptide is Mediator of RNA polymerase II transcription subunit 20 (MED20) (Gallus gallus (Chicken)).